The sequence spans 70 residues: uncharacterized protein (70 aa).

A helical transmembrane segment spans residues 12-32 (VLFMNFFSVFVCTIGTLFLVF).

It localises to the membrane. This is an uncharacterized protein from Saccharomyces cerevisiae (strain ATCC 204508 / S288c) (Baker's yeast).